The primary structure comprises 865 residues: Outer membrane usher protein HtrE (865 aa).

The first 29 residues, methionine 1 to serine 29, serve as a signal peptide directing secretion. The cysteines at positions 838 and 862 are disulfide-linked.

The protein belongs to the fimbrial export usher family.

It localises to the cell outer membrane. Its function is as follows. Part of the yadCKLM-htrE-yadVN fimbrial operon. Could contribute to adhesion to various surfaces in specific environmental niches. Probably involved in the export and assembly of fimbrial subunits across the outer membrane. The chain is Outer membrane usher protein HtrE (htrE) from Escherichia coli (strain K12).